Consider the following 547-residue polypeptide: Glucose-6-phosphate isomerase 2 (547 aa).

Catalysis depends on Glu351, which acts as the Proton donor. Active-site residues include His382 and Lys508.

This sequence belongs to the GPI family.

The protein resides in the cytoplasm. The enzyme catalyses alpha-D-glucose 6-phosphate = beta-D-fructose 6-phosphate. It functions in the pathway carbohydrate biosynthesis; gluconeogenesis. Its pathway is carbohydrate degradation; glycolysis; D-glyceraldehyde 3-phosphate and glycerone phosphate from D-glucose: step 2/4. Catalyzes the reversible isomerization of glucose-6-phosphate to fructose-6-phosphate. This chain is Glucose-6-phosphate isomerase 2, found in Neisseria gonorrhoeae (strain ATCC 700825 / FA 1090).